An 87-amino-acid chain; its full sequence is HssA/B-like protein 57 (87 aa).

Belongs to the hssA/B family.

The protein is HssA/B-like protein 57 (hssl57) of Dictyostelium discoideum (Social amoeba).